Consider the following 305-residue polypeptide: MLTTSSSRGQRPFGARVKAFVALTKPRIIELLLITTVPVMFLAEQGVPSLRLVLLTCLGGYLSAGGANALNMYIDRDIDALMERTSQRPLVTGMVSPRECLAFGITLAVVSTLLFGLTVNWLSAWLSLGALLFYVVVYTMILKRRTSQNIVWGGIAGCLPVLIGWSSVTDSMSWAPVILFLVMFFWTPPHYWPLSMKVKDDYARVGVPMLPVVASNKVVARQIVIYSWVMVGVSLLLTPLGYTGWFYTLVALLAGGFWLWEAHGLQNRAKAEVTGGKLKEMRLFHWSITYVSILFVAVAVDPFLR.

Helical transmembrane passes span 28 to 48 (IIEL…QGVP), 52 to 72 (LVLL…ALNM), 101 to 121 (LAFG…TVNW), 122 to 142 (LSAW…TMIL), 149 to 169 (NIVW…SSVT), 174 to 194 (WAPV…YWPL), 218 to 238 (VVAR…LLLT), 240 to 260 (LGYT…FWLW), and 283 to 303 (LFHW…VDPF).

The protein belongs to the UbiA prenyltransferase family. Protoheme IX farnesyltransferase subfamily.

It localises to the cell membrane. The enzyme catalyses heme b + (2E,6E)-farnesyl diphosphate + H2O = Fe(II)-heme o + diphosphate. The protein operates within porphyrin-containing compound metabolism; heme O biosynthesis; heme O from protoheme: step 1/1. Functionally, converts heme B (protoheme IX) to heme O by substitution of the vinyl group on carbon 2 of heme B porphyrin ring with a hydroxyethyl farnesyl side group. This Streptomyces avermitilis (strain ATCC 31267 / DSM 46492 / JCM 5070 / NBRC 14893 / NCIMB 12804 / NRRL 8165 / MA-4680) protein is Protoheme IX farnesyltransferase.